Consider the following 126-residue polypeptide: Small ribosomal subunit protein uS13 (126 aa).

The tract at residues 92–126 (HRRGLPVRGQRTKTNARTRKGPKRTVAGKKKAGRK) is disordered.

It belongs to the universal ribosomal protein uS13 family. As to quaternary structure, part of the 30S ribosomal subunit. Forms a loose heterodimer with protein S19. Forms two bridges to the 50S subunit in the 70S ribosome.

In terms of biological role, located at the top of the head of the 30S subunit, it contacts several helices of the 16S rRNA. In the 70S ribosome it contacts the 23S rRNA (bridge B1a) and protein L5 of the 50S subunit (bridge B1b), connecting the 2 subunits; these bridges are implicated in subunit movement. Contacts the tRNAs in the A and P-sites. The protein is Small ribosomal subunit protein uS13 of Kineococcus radiotolerans (strain ATCC BAA-149 / DSM 14245 / SRS30216).